The sequence spans 793 residues: Transcription factor castor (793 aa).

Residues 44–53 show a composition bias toward polar residues; sequence NEDISSSTSV. Disordered stretches follow at residues 44-101, 199-259, and 272-296; these read NEDI…NLIA, VTST…HTNA, and LESTTDSLDSPSMYTPVKQPADSSY. 3 stretches are compositionally biased toward low complexity: residues 54–68, 81–98, and 210–221; these read QQQQQQQQEQLQQPQ, SSQNTNCSSSRSCSPNSN, and ATPAPSAGATAG. Threonine 211 bears the Phosphothreonine mark. Serine 215 is subject to Phosphoserine. Over residues 233–242 the composition is skewed to acidic residues; it reads ESADDDEDDD. The segment covering 245 to 254 has biased composition (low complexity); the sequence is LSSLTSCSSS. The segment covering 273–284 has biased composition (polar residues); that stretch reads ESTTDSLDSPSM. The C2H2-type 1; atypical zinc-finger motif lies at 377-402; sequence FHCHEEPCQGKILSKKDDIIRHLKWH. 3 consecutive C2H2-type zinc fingers follow at residues 439–463, 498–522, and 556–580; these read YHCVYEHCPKVYVSTSDVQMHANFH, YHCCREGCTHTFKNKADMDKHKTYH, and IHCVREGCDYILHSSSQMISHKRKH. A disordered region spans residues 599 to 682; it reads EESSLDAMPQ…RLKVEDESSN (84 aa). The segment covering 608 to 629 has biased composition (low complexity); that stretch reads QQQQQQQQQQPTSLSQSQSSSS. A compositionally biased stretch (polar residues) spans 630 to 644; it reads VCGGSNTSTPLSSLS. The segment at residues 650–662 is a DNA-binding region (a.T hook); the sequence is ARKRGRPPKKIQL.

In terms of tissue distribution, expressed in a specific subset of neuroblasts in the ventral nerve cord and the procephalic region in the embryo. Expressed in many, if not all, late delaminating NBs, and in early NBs, but only after they have undergone several rounds of ganglion mother cell-producing divisions.

The protein resides in the nucleus. Its function is as follows. Transcription factor that specifies expression of key genes in developing central nervous system (CNS). Essential for many, if not all, late developing neuroblastoma (NB) sublineages. Binds to the 5'-[CG]C[CT][CT]AAAAA[AT]-3' DNA sequence, like hb, suggesting that cas and hb act as a late regulators in early and late CNS NB sublineage, respectively. Acts by repressing expression of nub/pdm-1 and pdm2/pdm-2 POU genes, and restrict their pattern of expression in appropriate cells. Required for a full expression of vvl/drifter and acj6/I-POU; it is however unknown whether it directly activates these genes. Controls engrailed (en) expression in the ventral nerve cord. The polypeptide is Transcription factor castor (cas) (Drosophila melanogaster (Fruit fly)).